Reading from the N-terminus, the 111-residue chain is Ribosome-binding factor A (111 aa).

The protein belongs to the RbfA family. In terms of assembly, monomer. Binds 30S ribosomal subunits, but not 50S ribosomal subunits or 70S ribosomes.

It localises to the cytoplasm. One of several proteins that assist in the late maturation steps of the functional core of the 30S ribosomal subunit. Associates with free 30S ribosomal subunits (but not with 30S subunits that are part of 70S ribosomes or polysomes). Required for efficient processing of 16S rRNA. May interact with the 5'-terminal helix region of 16S rRNA. The protein is Ribosome-binding factor A of Helicobacter pylori (strain HPAG1).